The following is an 828-amino-acid chain: Sarcolemmal membrane-associated protein (828 aa).

The necessary for targeting to centrosomes stretch occupies residues 1-163; the sequence is MPSALAIFTC…AANTPSMYSQ (163 aa). Residues 1–802 lie on the Cytoplasmic side of the membrane; it reads MPSALAIFTC…REKGNNKPWP (802 aa). The FHA domain maps to 28 to 85; that stretch reads IKIGRSVARCRPAQNNATFDCKVLSRNHALVWFDHKTGKFYLQDTKSSNGTFINSQRL. A Phosphoserine modification is found at Ser148. Coiled coils occupy residues 167 to 202 and 230 to 388; these read QLSQYLQEALHREQMLEQKLATLQRLLAITQEASDT and NQTE…QEKT. The chain crosses the membrane as a helical; Anchor for type IV membrane protein span at residues 339–359; that stretch reads KKELQHKIDEMEEKEQELQAK. Basic and acidic residues predominate over residues 433–446; that stretch reads KLSKENQTRAKESD. The tract at residues 433–467 is disordered; it reads KLSKENQTRAKESDFSDTLSPSKEKSSDDTTDAQM. Residues Ser448 and Ser452 each carry the phosphoserine modification. Residues 477–799 adopt a coiled-coil conformation; it reads AKVSLLKDDL…KLLREKGNNK (323 aa). The helical; Anchor for type IV membrane protein transmembrane segment at 803–823 threads the bilayer; that stretch reads WMPMLAALVAVTAIVLYVPGL. At 824 to 828 the chain is on the extracellular side; the sequence is ARASP.

Belongs to the SLMAP family. In terms of assembly, homodimer. Interacts with myosin. Interacts with SIKE1 and both associate with the STRIPAK core complex composed of PP2A catalytic and scaffolding subunits, the striatins (PP2A regulatory subunits), the striatin-associated proteins MOB4, STRIP1 and STRIP2, PDCD10 and members of the STE20 kinases, such as STK24 and STK26. Interacts (via FHA domain) with STK3 (when phosphorylated); the interaction associates STK3 with the STRIPAK complex.

Its subcellular location is the cell membrane. It is found in the sarcolemma. The protein resides in the cytoplasm. The protein localises to the myofibril. It localises to the sarcomere. Its subcellular location is the m line. It is found in the z line. The protein resides in the cytoskeleton. The protein localises to the microtubule organizing center. It localises to the centrosome. Its subcellular location is the endoplasmic reticulum membrane. It is found in the mitochondrion membrane. In terms of biological role, associates with the striatin-interacting phosphatase and kinase (STRIPAK) core complex, forming the extended (SIKE1:SLMAP)STRIPAK complex. The (SIKE1:SLMAP)STRIPAK complex dephosphorylates STK3 leading to the inhibition of Hippo signaling and the control of cell growth. May play a role during myoblast fusion. In Homo sapiens (Human), this protein is Sarcolemmal membrane-associated protein.